Here is a 470-residue protein sequence, read N- to C-terminus: Flavin-containing monooxygenase FMO GS-OX-like 6 (470 aa).

17–22 (GAGAAG) provides a ligand contact to FAD. 214–219 (GYQSSG) lines the NADP(+) pocket.

This sequence belongs to the FMO family. Requires FAD as cofactor.

Functionally, catalyzes the conversion of methylthioalkyl glucosinolates of any chain length into methylsulfinylalkyl glucosinolates. The chain is Flavin-containing monooxygenase FMO GS-OX-like 6 from Arabidopsis thaliana (Mouse-ear cress).